The primary structure comprises 264 residues: Thymidylate synthase (264 aa).

Arg-21 lines the dUMP pocket. His-51 serves as a coordination point for (6R)-5,10-methylene-5,6,7,8-tetrahydrofolate. 126 to 127 (RR) serves as a coordination point for dUMP. Residue Cys-146 is the Nucleophile of the active site. DUMP-binding positions include 166-169 (RSAD), Asn-177, and 207-209 (HLY). Asp-169 lines the (6R)-5,10-methylene-5,6,7,8-tetrahydrofolate pocket. Ala-263 contacts (6R)-5,10-methylene-5,6,7,8-tetrahydrofolate.

This sequence belongs to the thymidylate synthase family. Bacterial-type ThyA subfamily. Homodimer.

The protein localises to the cytoplasm. It carries out the reaction dUMP + (6R)-5,10-methylene-5,6,7,8-tetrahydrofolate = 7,8-dihydrofolate + dTMP. The protein operates within pyrimidine metabolism; dTTP biosynthesis. Functionally, catalyzes the reductive methylation of 2'-deoxyuridine-5'-monophosphate (dUMP) to 2'-deoxythymidine-5'-monophosphate (dTMP) while utilizing 5,10-methylenetetrahydrofolate (mTHF) as the methyl donor and reductant in the reaction, yielding dihydrofolate (DHF) as a by-product. This enzymatic reaction provides an intracellular de novo source of dTMP, an essential precursor for DNA biosynthesis. This Methylorubrum extorquens (strain CM4 / NCIMB 13688) (Methylobacterium extorquens) protein is Thymidylate synthase.